The following is a 411-amino-acid chain: Ornithine cyclodeaminase (411 aa).

Asn236, Ala237, Asp315, Thr347, Met348, Leu349, His350, Asp368, Asp391, and Val392 together coordinate NAD(+).

It belongs to the AgrE/ArgZ ornithine cyclodeaminase family. Requires NAD(+) as cofactor.

It carries out the reaction L-ornithine = L-proline + NH4(+). In terms of biological role, catalyzes the conversion of ornithine to proline, with the release of ammonia. The polypeptide is Ornithine cyclodeaminase (Methanothermobacter thermautotrophicus (strain ATCC 29096 / DSM 1053 / JCM 10044 / NBRC 100330 / Delta H) (Methanobacterium thermoautotrophicum)).